Reading from the N-terminus, the 248-residue chain is UPF0246 protein RC0754 (248 aa).

This sequence belongs to the UPF0246 family.

The polypeptide is UPF0246 protein RC0754 (Rickettsia conorii (strain ATCC VR-613 / Malish 7)).